Consider the following 313-residue polypeptide: Protein-methionine-sulfoxide reductase catalytic subunit MsrP (313 aa).

Positions 1 to 46 (MPSYRAPKIAAAEITPERFFLDRRTFIAAAAGSLALSVPKPSRAAA) form a signal peptide, tat-type signal. Mo-molybdopterin is bound by residues Asn-70, 73-74 (YE), Cys-127, Thr-162, Asn-212, Arg-217, and 228-230 (GIK).

It belongs to the MsrP family. Heterodimer of a catalytic subunit (MsrP) and a heme-binding subunit (MsrQ). Mo-molybdopterin serves as cofactor. Predicted to be exported by the Tat system. The position of the signal peptide cleavage has not been experimentally proven.

The protein resides in the periplasm. It carries out the reaction L-methionyl-[protein] + a quinone + H2O = L-methionyl-(S)-S-oxide-[protein] + a quinol. The catalysed reaction is L-methionyl-[protein] + a quinone + H2O = L-methionyl-(R)-S-oxide-[protein] + a quinol. Part of the MsrPQ system that repairs oxidized periplasmic proteins containing methionine sulfoxide residues (Met-O), using respiratory chain electrons. Thus protects these proteins from oxidative-stress damage caused by reactive species of oxygen and chlorine generated by the host defense mechanisms. MsrPQ is essential for the maintenance of envelope integrity under bleach stress, rescuing a wide series of structurally unrelated periplasmic proteins from methionine oxidation. The catalytic subunit MsrP is non-stereospecific, being able to reduce both (R-) and (S-) diastereoisomers of methionine sulfoxide. This chain is Protein-methionine-sulfoxide reductase catalytic subunit MsrP, found in Rhizobium meliloti (strain 1021) (Ensifer meliloti).